The following is a 525-amino-acid chain: Protein disulfide-isomerase A2 (525 aa).

An N-terminal signal peptide occupies residues 1–21 (MSCQLLPVLLLLLLRASCPWG). A Thioredoxin 1 domain is found at 27 to 152 (RSPSEEPPEE…IAEWLRRRVG (126 aa)). Catalysis depends on nucleophile residues Cys-71 and Cys-74. Cysteines 71 and 74 form a disulfide. Asn-127 and Asn-284 each carry an N-linked (GlcNAc...) asparagine glycan. The Thioredoxin 2 domain occupies 367 to 496 (VLNGQVKPYL…FSKFLDNGGV (130 aa)). Active-site nucleophile residues include Cys-418 and Cys-421. Cys-418 and Cys-421 are disulfide-bonded. Residues 498–525 (PTEEPLEEPAAPFPEPPANSTMGSKEEL) are disordered. Asn-516 is a glycosylation site (N-linked (GlcNAc...) asparagine). A compositionally biased stretch (polar residues) spans 516 to 525 (NSTMGSKEEL). A Prevents secretion from ER motif is present at residues 522–525 (KEEL).

The protein belongs to the protein disulfide isomerase family. As to quaternary structure, monomer; predominantly as monomer under reducing conditions. Homodimer; disulfide-linked. Part of a large chaperone multiprotein complex comprising DNAJB11, HSP90B1, HSPA5, HYOU, PDIA2, PDIA4, PDIA6, PPIB, SDF2L1, UGGT1 and very small amounts of ERP29, but not, or at very low levels, CALR nor CANX. In terms of processing, the disulfide-linked homodimer exhibits an enhanced chaperone activity. Post-translationally, glycosylated.

The protein localises to the endoplasmic reticulum lumen. The enzyme catalyses Catalyzes the rearrangement of -S-S- bonds in proteins.. Acts as an intracellular estrogen-binding protein. May be involved in modulating cellular levels and biological functions of estrogens in the pancreas. May act as a chaperone that inhibits aggregation of misfolded proteins. This chain is Protein disulfide-isomerase A2 (PDIA2), found in Pongo abelii (Sumatran orangutan).